Consider the following 97-residue polypeptide: U6-theraphotoxin-Hhn1a 2 (97 aa).

The signal sequence occupies residues 1–33; the sequence is MLIKQFSRRPKNMKVQILLAFAALFVLAVGSYA. The propeptide occupies 34–61; sequence SESKKLDLRDASFSAMFSADYQLNPQER. 3 disulfides stabilise this stretch: C63–C77, C70–C82, and C76–C89.

The protein belongs to the neurotoxin 10 (Hwtx-1) family. 12 (Hntx-12) subfamily. As to expression, expressed by the venom gland.

The protein resides in the secreted. Ion channel inhibitor. The protein is U6-theraphotoxin-Hhn1a 2 of Cyriopagopus hainanus (Chinese bird spider).